The sequence spans 200 residues: Holliday junction resolvase RecU (200 aa).

Residues Thr82, Asp84, Glu97, and Gln116 each coordinate Mg(2+).

It belongs to the RecU family. Requires Mg(2+) as cofactor.

The protein localises to the cytoplasm. The enzyme catalyses Endonucleolytic cleavage at a junction such as a reciprocal single-stranded crossover between two homologous DNA duplexes (Holliday junction).. In terms of biological role, endonuclease that resolves Holliday junction intermediates in genetic recombination. Cleaves mobile four-strand junctions by introducing symmetrical nicks in paired strands. Promotes annealing of linear ssDNA with homologous dsDNA. Required for DNA repair, homologous recombination and chromosome segregation. The polypeptide is Holliday junction resolvase RecU (Streptococcus gordonii (strain Challis / ATCC 35105 / BCRC 15272 / CH1 / DL1 / V288)).